A 405-amino-acid chain; its full sequence is Solute carrier family 35 member E2B (405 aa).

Residues M1 to S28 are disordered. The next 10 membrane-spanning stretches (helical) occupy residues L81 to G101, M106 to P126, F142 to V162, V167 to S187, T195 to A215, S219 to F241, A264 to G284, V296 to A316, F326 to G346, and N347 to Y367. The disordered stretch occupies residues S380–P405.

It belongs to the TPT transporter family. SLC35E subfamily.

The protein localises to the membrane. Putative transporter. The sequence is that of Solute carrier family 35 member E2B (SLC35E2B) from Homo sapiens (Human).